A 368-amino-acid chain; its full sequence is 4-hydroxy-3-methylbut-2-en-1-yl diphosphate synthase (flavodoxin) (368 aa).

4 residues coordinate [4Fe-4S] cluster: C268, C271, C303, and E310.

The protein belongs to the IspG family. [4Fe-4S] cluster is required as a cofactor.

The enzyme catalyses (2E)-4-hydroxy-3-methylbut-2-enyl diphosphate + oxidized [flavodoxin] + H2O + 2 H(+) = 2-C-methyl-D-erythritol 2,4-cyclic diphosphate + reduced [flavodoxin]. It functions in the pathway isoprenoid biosynthesis; isopentenyl diphosphate biosynthesis via DXP pathway; isopentenyl diphosphate from 1-deoxy-D-xylulose 5-phosphate: step 5/6. Converts 2C-methyl-D-erythritol 2,4-cyclodiphosphate (ME-2,4cPP) into 1-hydroxy-2-methyl-2-(E)-butenyl 4-diphosphate. This is 4-hydroxy-3-methylbut-2-en-1-yl diphosphate synthase (flavodoxin) from Listeria monocytogenes serotype 4b (strain CLIP80459).